The sequence spans 214 residues: Probable septum site-determining protein MinC (214 aa).

Belongs to the MinC family. In terms of assembly, interacts with MinD and FtsZ.

In terms of biological role, cell division inhibitor that blocks the formation of polar Z ring septums. Rapidly oscillates between the poles of the cell to destabilize FtsZ filaments that have formed before they mature into polar Z rings. Prevents FtsZ polymerization. This Thermoanaerobacter pseudethanolicus (strain ATCC 33223 / 39E) (Clostridium thermohydrosulfuricum) protein is Probable septum site-determining protein MinC.